Reading from the N-terminus, the 491-residue chain is Serine/threonine-protein kinase 3 (491 aa).

Methionine 1 carries the N-acetylmethionine modification. Serine 15 is subject to Phosphoserine; by PLK1. A Protein kinase domain is found at 27–278 (FDVLEKLGEG…ATQLLQHPFI (252 aa)). ATP contacts are provided by residues 33 to 41 (LGEGSYGSV) and lysine 56. Position 117 is a phosphothreonine; by PKB/AKT1 (threonine 117). Residue aspartate 146 is the Proton acceptor of the active site. Asparagine 151 and aspartate 164 together coordinate Mg(2+). Phosphothreonine; by autocatalysis occurs at positions 174 and 180. Residues 287–328 (LRDLITEAMEIKAKRHEEQQRELEEEEENSDEDELDSHTMVK) are a coiled coil. The interval 301-327 (RHEEQQRELEEEEENSDEDELDSHTMV) is disordered. Residues 309-321 (LEEEEENSDEDEL) show a composition bias toward acidic residues. Serine 316 carries the post-translational modification Phosphoserine. Phosphothreonine; by autocatalysis occurs at positions 336 and 378. A disordered region spans residues 370-392 (EDEEEEDGTMKRNATSPQVQRPS). Over residues 381 to 390 (RNATSPQVQR) the composition is skewed to polar residues. Threonine 384 carries the post-translational modification Phosphothreonine; by PKB/AKT1. Serine 385 and serine 444 each carry phosphoserine. Residues 437 to 484 (FDFLKNLSLEELQMRLKALDPMMEREIEELRQRYTAKRQPILDAMDAK) form the SARAH domain. Residues 442-475 (NLSLEELQMRLKALDPMMEREIEELRQRYTAKRQ) adopt a coiled-coil conformation.

This sequence belongs to the protein kinase superfamily. STE Ser/Thr protein kinase family. STE20 subfamily. Homodimer; mediated via the coiled-coil region. Interacts with NORE1, which inhibits autoactivation. Interacts with and stabilizes SAV1. Interacts with RAF1, which prevents dimerization and phosphorylation. Interacts with RASSF1. Interacts (via SARAH domain) with isoform 1 of NEK2. Interacts with ESR1 only in the presence of SAV1. Interacts with PKB/AKT1. Forms a tripartite complex with MOBKL1B and STK38. Interacts with RASSF2 (via SARAH domain). Interacts with DLG5 (via PDZ domain 3). Interacts with LATS1; this interaction is inhibited in the presence of DLG5. Interacts with MARK3 in the presence of DLG5. Interacts with RASSF5; this interaction inhibits STK3 autoactivation through heterodimerization. Interacts (when phosphorylated) with SLMAP (via FHA domain); the interaction associates STK3 with the STRIPAK complex. The cofactor is Mg(2+). Autophosphorylated on two residues Thr-174 and Thr-180, leading to activation. Phosphorylation at Thr-117 and Thr-384 by PKB/AKT1, leads to inhibition of its: cleavage, kinase activity, autophosphorylation at Thr-180, binding to RASSF1 and nuclear translocation, and increase in its binding to RAF1. Phosphorylated at Ser-15 by PLK1, leading to activation. When autophosphorylated at Thr-180, recruits STRIPAK complex and promotes PP2A-mediated dephosphorylation and inactivation of STK3. Post-translationally, proteolytically cleaved by caspase-3 during apoptosis. Proteolytic cleavage results in kinase activation and nuclear translocation of the truncated form (MST1/N). In terms of processing, ubiquitinated by TRIM69; leading to its redistribution to the perinuclear cytoskeleton, where it is phosphorylated by PLK1 and subsequently activated. In terms of tissue distribution, expressed at high levels in adult kidney, skeletal and placenta tissues and at very low levels in adult heart, lung and brain tissues.

It is found in the cytoplasm. The protein resides in the nucleus. Its subcellular location is the cytoskeleton. It localises to the microtubule organizing center. The protein localises to the centrosome. It catalyses the reaction L-seryl-[protein] + ATP = O-phospho-L-seryl-[protein] + ADP + H(+). The catalysed reaction is L-threonyl-[protein] + ATP = O-phospho-L-threonyl-[protein] + ADP + H(+). Its activity is regulated as follows. Inhibited by the C-terminal non-catalytic region. Activated by caspase-cleavage. Full activation also requires homodimerization and autophosphorylation of Thr-180, which are inhibited by the proto-oncogene product RAF1. Activated by RASSF1 which acts by preventing its dephosphorylation. When autophosphorylated at Thr-180, recruits STRIPAK complex and promotes PP2A-mediated dephosphorylation and inactivation of STK3. Functionally, stress-activated, pro-apoptotic kinase which, following caspase-cleavage, enters the nucleus and induces chromatin condensation followed by internucleosomal DNA fragmentation. Key component of the Hippo signaling pathway which plays a pivotal role in organ size control and tumor suppression by restricting proliferation and promoting apoptosis. The core of this pathway is composed of a kinase cascade wherein STK3/MST2 and STK4/MST1, in complex with its regulatory protein SAV1, phosphorylates and activates LATS1/2 in complex with its regulatory protein MOB1, which in turn phosphorylates and inactivates YAP1 oncoprotein and WWTR1/TAZ. Phosphorylation of YAP1 by LATS2 inhibits its translocation into the nucleus to regulate cellular genes important for cell proliferation, cell death, and cell migration. STK3/MST2 and STK4/MST1 are required to repress proliferation of mature hepatocytes, to prevent activation of facultative adult liver stem cells (oval cells), and to inhibit tumor formation. Phosphorylates NKX2-1. Phosphorylates NEK2 and plays a role in centrosome disjunction by regulating the localization of NEK2 to centrosome, and its ability to phosphorylate CROCC and CEP250. In conjunction with SAV1, activates the transcriptional activity of ESR1 through the modulation of its phosphorylation. Positively regulates RAF1 activation via suppression of the inhibitory phosphorylation of RAF1 on 'Ser-259'. Phosphorylates MOBKL1A and RASSF2. Phosphorylates MOBKL1B on 'Thr-74'. Acts cooperatively with MOBKL1B to activate STK38. The chain is Serine/threonine-protein kinase 3 from Homo sapiens (Human).